The following is a 456-amino-acid chain: Exodeoxyribonuclease 7 large subunit (456 aa).

Belongs to the XseA family. In terms of assembly, heterooligomer composed of large and small subunits.

The protein resides in the cytoplasm. The catalysed reaction is Exonucleolytic cleavage in either 5'- to 3'- or 3'- to 5'-direction to yield nucleoside 5'-phosphates.. Functionally, bidirectionally degrades single-stranded DNA into large acid-insoluble oligonucleotides, which are then degraded further into small acid-soluble oligonucleotides. The polypeptide is Exodeoxyribonuclease 7 large subunit (Escherichia coli O157:H7).